The following is a 215-amino-acid chain: Cytochrome b6 (215 aa).

The chain crosses the membrane as a helical span at residues 32-52 (IFYCFGGLVLTCFLIQVATGF). Position 35 (C35) interacts with heme c. Residues H86 and H100 each coordinate heme b. The next 3 helical transmembrane spans lie at 90-110 (ASMMVLMMVLHVFRVYLTGGF), 116-136 (LTWVTGVTLSVVTVSFGVTGY), and 186-206 (AHTFVLPLAAAVLMLTHFLMI). Residues H187 and H202 each coordinate heme b.

This sequence belongs to the cytochrome b family. PetB subfamily. As to quaternary structure, the 4 large subunits of the cytochrome b6-f complex are cytochrome b6, subunit IV (17 kDa polypeptide, PetD), cytochrome f and the Rieske protein, while the 4 small subunits are PetG, PetL, PetM and PetN. The complex functions as a dimer. Heme b is required as a cofactor. It depends on heme c as a cofactor.

The protein resides in the plastid. Its subcellular location is the chloroplast thylakoid membrane. Component of the cytochrome b6-f complex, which mediates electron transfer between photosystem II (PSII) and photosystem I (PSI), cyclic electron flow around PSI, and state transitions. The polypeptide is Cytochrome b6 (Phaeodactylum tricornutum (strain CCAP 1055/1)).